The primary structure comprises 337 residues: WAT1-related protein At1g11460 (337 aa).

A run of 10 helical transmembrane segments spans residues 14-34 (WPPI…NALV), 46-66 (IIGA…AYIL), 83-103 (FISG…GLSY), 107-127 (TVAC…ALIL), 139-159 (AGMI…FLTF), 188-208 (WLLG…WILF), 220-240 (FSST…LSLY), 254-274 (FVIG…TVSV), 284-304 (VFVS…DFII), and 309-329 (LYLG…VFLW). An EamA 1 domain is found at 27 to 157 (MGSVNALVKK…IICISGALFL (131 aa)). Positions 220–328 (FSSTCLMSIF…GTITGLYVFL (109 aa)) constitute an EamA 2 domain.

The protein belongs to the drug/metabolite transporter (DMT) superfamily. Plant drug/metabolite exporter (P-DME) (TC 2.A.7.4) family.

The protein resides in the membrane. The chain is WAT1-related protein At1g11460 from Arabidopsis thaliana (Mouse-ear cress).